Reading from the N-terminus, the 556-residue chain is MAGGAREVLTLQLGHFAGFVGAHWWNQQDAALGRMAEDEESPGELCPDVLYRTGRTLHGQETYTPRLILMDLKGSLNTLKEEGNLYRDRQLEAAVAWQGKLSTHREDAHPKNPNLQGLLSAEGVRSSDGAWRAKLIQNIQNGKENSIKVWSDFLRVHLHPRSICVIHKYHHDGETGRLEAFGQGESVLKEPRYLEELEDRLHFYVEECDYLQGFQLLCDLHDGFSGVGAKTAELLQDEYAGRGVLTWGLLPGPYSLGEPQKNIYRLLNTAFGLVHLTGYSSFVCPLSLGGNLGLRPKPPVNFPSLHYDATLPFHCSAILATALDTVTVPYRLRSSMVTMAHLADVLSFSGKKVVTAEAIIPFPLVRGQSLPDILTQLGEATPWTSLSACGDSAGHRCFAQSVVLRGIDRASHTSKLNPGTPLPSALHACASGEEVLAQYLQQQHPRVLSSSHLLLTPCKVAPPYPHFFSSFSQKGLAMDSTPKGAAVQSIPVFGALRSTSSLHRTLGDLAEELSRLDLRRWASFMDAGVEQDDMEEMLHELHRLAQCYQEGDSLSN.

Ser-41 is modified (phosphoserine).

This sequence belongs to the misato family.

Its subcellular location is the mitochondrion outer membrane. It localises to the cytoplasm. Its function is as follows. Involved in the regulation of mitochondrial distribution and morphology. Required for mitochondrial fusion and mitochondrial network formation. The protein is Protein misato homolog 1 (Msto1) of Mus musculus (Mouse).